Here is a 192-residue protein sequence, read N- to C-terminus: A-type ATP synthase subunit E (192 aa).

The protein belongs to the V-ATPase E subunit family. As to quaternary structure, has multiple subunits with at least A(3), B(3), C, D, E, F, H, I and proteolipid K(x).

Its subcellular location is the cell membrane. Component of the A-type ATP synthase that produces ATP from ADP in the presence of a proton gradient across the membrane. The polypeptide is A-type ATP synthase subunit E (Methanocorpusculum labreanum (strain ATCC 43576 / DSM 4855 / Z)).